The sequence spans 544 residues: MAKEIKFSEDARAAMLRGVDQLANTVKTTLGPKGRNVVLDKSYGSPEITNDGVTIAKSIDLEDHYENMGAKLVAEVASKTNDIAGDGTTTATVLAQSIIREGMKNVTAGANPVGIRTGIEKATKAAVDELHKISHKVNGKKEIAQVASVSSSNTEVGSLIADAMEKVGHDGVITIEESKGIDTELSVVEGMQFDRGYLSQYMVTDNDKMEADLDDPYILITDKKISNIQDILPLLQEIVQQGKALLIIADDVAGEALPTLVLNKIRGTFNVVAVKAPGFGDRRKAQLEDIATLTGGTVISSDLGLDLKDTKLEQLGRAGKVTVTKDNTTIVDGAGSKDAIAERVNIIKKQIDDTTSDFDREKLQERLAKLAGGVAVVKVGAATETELKERKYRIEDALNATRAAVEEGYVAGGGTALVDVLPAVAALKEEGDVQTGINIVLRALEEPVRQIAENAGKEGSVIVEQLKKEKQGVGYNAATDEWEDMAKSGIIDPTKVTRSALQNAASVAALMLTTEAVVADKPDPNANNNAAAGANPAAGMGGMM.

Residues 29 to 32 (TLGP), 86 to 90 (DGTTT), Gly-413, 476 to 478 (NAA), and Asp-492 contribute to the ATP site. A disordered region spans residues 522–544 (PDPNANNNAAAGANPAAGMGGMM). A compositionally biased stretch (low complexity) spans 524 to 538 (PNANNNAAAGANPAA).

This sequence belongs to the chaperonin (HSP60) family. Forms a cylinder of 14 subunits composed of two heptameric rings stacked back-to-back. Interacts with the co-chaperonin GroES.

Its subcellular location is the cytoplasm. The enzyme catalyses ATP + H2O + a folded polypeptide = ADP + phosphate + an unfolded polypeptide.. Functionally, together with its co-chaperonin GroES, plays an essential role in assisting protein folding. The GroEL-GroES system forms a nano-cage that allows encapsulation of the non-native substrate proteins and provides a physical environment optimized to promote and accelerate protein folding. This is Chaperonin GroEL from Lacticaseibacillus casei (strain BL23) (Lactobacillus casei).